A 619-amino-acid polypeptide reads, in one-letter code: ESX-2 secretion system protein EccA2 (619 aa).

An ATP-binding site is contributed by 373–380; that stretch reads GPPGTGKT.

The protein belongs to the CbxX/CfxQ family. In terms of assembly, part of the ESX-2 / type VII secretion system (T7SS), which is composed of cytosolic and membrane components. Residues 522-619 interact with an artificial EsxB-EsxA heterodimer from the adjacent ESX-1 locus.

The protein localises to the cytoplasm. Functionally, shows ATPase activity. Could provide energy for export of ESX-2 substrates. The sequence is that of ESX-2 secretion system protein EccA2 (eccA2) from Mycobacterium tuberculosis (strain ATCC 25618 / H37Rv).